Consider the following 205-residue polypeptide: Protein-L-isoaspartate O-methyltransferase (205 aa).

Ser-52 is a catalytic residue.

This sequence belongs to the methyltransferase superfamily. L-isoaspartyl/D-aspartyl protein methyltransferase family.

The protein localises to the cytoplasm. The catalysed reaction is [protein]-L-isoaspartate + S-adenosyl-L-methionine = [protein]-L-isoaspartate alpha-methyl ester + S-adenosyl-L-homocysteine. Catalyzes the methyl esterification of L-isoaspartyl residues in peptides and proteins that result from spontaneous decomposition of normal L-aspartyl and L-asparaginyl residues. It plays a role in the repair and/or degradation of damaged proteins. This is Protein-L-isoaspartate O-methyltransferase from Gloeobacter violaceus (strain ATCC 29082 / PCC 7421).